We begin with the raw amino-acid sequence, 745 residues long: Phosphoribosylformylglycinamidine synthase subunit PurL (745 aa).

The active site involves histidine 47. ATP contacts are provided by tyrosine 50 and lysine 90. Glutamate 92 contacts Mg(2+). Substrate-binding positions include 93-96 (SHNH) and arginine 115. Histidine 94 acts as the Proton acceptor in catalysis. Aspartate 116 contributes to the Mg(2+) binding site. Substrate is bound at residue glutamine 240. Mg(2+) is bound at residue aspartate 268. 312–314 (ESQ) is a substrate binding site. 2 residues coordinate ATP: asparagine 501 and glycine 538. Asparagine 539 contacts Mg(2+). Serine 541 serves as a coordination point for substrate.

This sequence belongs to the FGAMS family. In terms of assembly, monomer. Part of the FGAM synthase complex composed of 1 PurL, 1 PurQ and 2 PurS subunits.

The protein localises to the cytoplasm. It carries out the reaction N(2)-formyl-N(1)-(5-phospho-beta-D-ribosyl)glycinamide + L-glutamine + ATP + H2O = 2-formamido-N(1)-(5-O-phospho-beta-D-ribosyl)acetamidine + L-glutamate + ADP + phosphate + H(+). The protein operates within purine metabolism; IMP biosynthesis via de novo pathway; 5-amino-1-(5-phospho-D-ribosyl)imidazole from N(2)-formyl-N(1)-(5-phospho-D-ribosyl)glycinamide: step 1/2. Part of the phosphoribosylformylglycinamidine synthase complex involved in the purines biosynthetic pathway. Catalyzes the ATP-dependent conversion of formylglycinamide ribonucleotide (FGAR) and glutamine to yield formylglycinamidine ribonucleotide (FGAM) and glutamate. The FGAM synthase complex is composed of three subunits. PurQ produces an ammonia molecule by converting glutamine to glutamate. PurL transfers the ammonia molecule to FGAR to form FGAM in an ATP-dependent manner. PurS interacts with PurQ and PurL and is thought to assist in the transfer of the ammonia molecule from PurQ to PurL. In Leptospira interrogans serogroup Icterohaemorrhagiae serovar Lai (strain 56601), this protein is Phosphoribosylformylglycinamidine synthase subunit PurL.